Consider the following 432-residue polypeptide: Transcription factor E2F1 (432 aa).

Disordered stretches follow at residues 39 to 85 and 98 to 126; these read DVGA…GRPP and YLAGSSGPFRGRGRHPGKGVKSPGEKSRY. The interval 65 to 106 is cyclin A:CDK2 binding; sequence ATPQAPRPAPSAPRPALGRPPVKRRLDLETDHQYLAGSSGPF. The segment at 87 to 189 is interaction with BIRC2/c-IAP1; the sequence is KRRLDLETDH…KKSKNHIQWL (103 aa). A DNA-binding region spans residues 108–192; that stretch reads GRGRHPGKGV…KNHIQWLGSR (85 aa). An N6-acetyllysine mark is found at Lys-115, Lys-118, and Lys-123. The interval 151 to 172 is leucine-zipper; it reads LNWAAEVLKVQKRRIYDITNVL. Positions 156 to 192 match the DEF box motif; sequence EVLKVQKRRIYDITNVLEGIQLIAKKSKNHIQWLGSR. Lys-183 is subject to N6-methyllysine; by SETD7. A required for interaction with TRIM28 region spans residues 190 to 377; it reads GSRTMVGIGQ…RLSPLVAADS (188 aa). The tract at residues 193–282 is dimerization; it reads TMVGIGQRLE…AVDSAETFQI (90 aa). Residues 297–342 form a disordered region; sequence PEESAEGISPGRTSYQETSGEDRNADSGTAGPPPSPPSTSPTLDPS. Residues 363–432 are transactivation; the sequence is PMEEDRLSPL…DFGDLTPLDF (70 aa). Residues Ser-370 and Ser-398 each carry the phosphoserine modification. The segment at 404 to 421 is RB1 binding; sequence VDYHFGLEEGEGIRDLFD. Position 428 is a phosphothreonine (Thr-428).

The protein belongs to the E2F/DP family. Component of the DRTF1/E2F transcription factor complex. Forms heterodimers with DP family members. The E2F1 complex binds specifically hypophosphorylated RB1, the interaction represses E2F1-driven transcription. During the cell cycle, RB1 becomes phosphorylated in mid-to-late G1 phase, detaches from the DRTF1/E2F complex, rendering E2F transcriptionally active. Interacts with TRRAP, which probably mediates its interaction with histone acetyltransferase complexes, leading to transcription activation. Binds TOPBP1 and EAPP. Interacts with ARID3A. Interacts with TRIM28; the interaction inhibits E2F1 acetylation through recruiting HDAC1 and represses its transcriptional activity. Interaction with KAT2B; the interaction acetylates E2F1 enhancing its DNA-binding and transcriptional activity. Interacts with BIRC2/c-IAP1 (via BIR domains). The complex TFDP1:E2F1 interacts with CEBPA; the interaction prevents CEBPA binding to target genes promoters and represses its transcriptional activity. Interacts with RRP1B. Interacts with HCFC1. Interacts with KMT2E; the interaction is probably indirect and is mediated via HCFC1. Interacts with DCAF5 and L3MBTL3; the interaction requires methylation at Lys-183 and is necessary to target E2F1 for ubiquitination by the CRL4-DCAF5 E3 ubiquitin ligase complex. Post-translationally, phosphorylated by CDK2 and cyclin A-CDK2 in the S-phase. Phosphorylation by CHEK2 stabilizes E2F1 upon DNA damage and regulates its effect on transcription and apoptosis. Phosphorylation at Ser-398 by GSK3B promotes interaction with USP11, leading to its deubiquitination and stabilization. In terms of processing, ubiquitinated via 'Lys-63'-linked ubiquitin, leading to its degradation. Deubiquitinated by USP11 following phosphorylation by GSK3B, promoting its stability. Acetylation stimulates DNA-binding. Enhanced under stress conditions such as DNA damage and inhibited by retinoblastoma protein RB1. Regulated by KAP1/TRIM28 which recruits HDAC1 to E2F1 resulting in deacetylation. Post-translationally, methylation at Lys-183 by SETD7 promotes E2F1 ubiquitin-dependent proteasomal degradation.

The protein resides in the nucleus. BIRC2/c-IAP1 stimulates its transcriptional activity. Transcription activator that binds DNA cooperatively with DP proteins through the E2 recognition site, 5'-TTTC[CG]CGC-3' found in the promoter region of a number of genes whose products are involved in cell cycle regulation or in DNA replication. The DRTF1/E2F complex functions in the control of cell-cycle progression from G1 to S phase. E2F1 binds preferentially RB1 in a cell-cycle dependent manner. It can mediate both cell proliferation and TP53/p53-dependent apoptosis. Blocks adipocyte differentiation by binding to specific promoters repressing CEBPA binding to its target gene promoters. Directly activates transcription of PEG10. Positively regulates transcription of RRP1B. The chain is Transcription factor E2F1 from Rattus norvegicus (Rat).